A 463-amino-acid polypeptide reads, in one-letter code: MSYPGYPPTGYPPFPGYPPTGQESSFPPPGQYPYPSGFPPMGGGAYPPAPSSGYPGAGGYPAPGGYPAPGGYPGAPQPGGAPSYPGGQGFGAPPGGAGFPGYPQPPTQSYGGGPAQVPLPGGFPGGAMPSQYPGGQSPYPSQPAPMTQGTHGTIRPAANFDAMRDAEVLRKAMKGFGTDEQAIIDVVANRSNDQRQKIKAAFKTMYGKDLIKDLKSELSGNMEELILALFMPSTYYDAWSLRNAMKGAGTQERVLIEILCTRTNQEIREIVRCYQSEFGRDLEKDIRSDTSGHFERLLVSMCQGNRDENQNVNHQLAQEDAQRLYQAGEGRLGTDESCFNMILATRSFPQLKATMEAYSRMANRDLLNSVSREFSGNVESGLKTILQCALNRPAFFAERLYYSMKGAGTDDSTLVRIVVTRSEIDLVQIKQMFSQMYQKTLGTMIASDTSGDYRKLLLAIVGQ.

Pro residues-rich tracts occupy residues 1–18 (MSYP…PGYP) and 26–38 (FPPP…PSGF). Disordered regions lie at residues 1–54 (MSYP…SSGY) and 71–153 (GYPG…THGT). The interval 1-140 (MSYPGYPPTG…QYPGGQSPYP (140 aa)) is repeat-rich region. Residues 5 to 20 (GYPPTGYPPFPGYPPT) form a 3 X 5 AA tandem repeats of G-Y-P-P-X region. Positions 86-99 (GGQGFGAPPGGAGF) are enriched in gly residues. Annexin repeat units follow at residues 160-231 (FDAM…ALFM), 232-303 (PSTY…SMCQ), 315-387 (QLAQ…TILQ), and 391-462 (NRPA…AIVG). An N6-acetyllysine modification is found at Lys-208.

This sequence belongs to the annexin family. In terms of assembly, interacts with PDCD6.

Calcium/phospholipid-binding protein which promotes membrane fusion and is involved in exocytosis. The protein is Annexin A7 (ANXA7) of Bos taurus (Bovine).